A 526-amino-acid chain; its full sequence is Protein spinster homolog 1 (526 aa).

Positions 1–43 (MTSRSSQGDAAPFLTQADNTEEEGAPDPGGHSSDEEEEEGKDH) are disordered. 12 helical membrane-spanning segments follow: residues 48–68 (HLLT…LFYI), 98–118 (GLVQ…FGYL), 126–146 (LIMC…SFVS), 159–179 (LVGV…ADLF), 187–207 (MLSF…IAGS), 218–238 (WALR…IFVA), 272–292 (FILS…LALW), 321–341 (MIFG…GVEI), 355–375 (LVCA…LAFA), 385–405 (FIFI…DILL), 419–439 (LQIV…IGVI), and 463–483 (MICA…ALFI).

The protein belongs to the major facilitator superfamily. Spinster (TC 2.A.1.49) family.

The protein resides in the lysosome membrane. It catalyses the reaction a 1-acyl-sn-glycero-3-phosphocholine(out) + H(+)(out) = a 1-acyl-sn-glycero-3-phosphocholine(in) + H(+)(in). The catalysed reaction is a 1-acyl-sn-glycero-3-phosphoethanolamine(out) + H(+)(out) = a 1-acyl-sn-glycero-3-phosphoethanolamine(in) + H(+)(in). The enzyme catalyses a 1-O-(1Z-alkenyl)-sn-glycero-3-phosphocholine(out) + H(+)(out) = a 1-O-(1Z-alkenyl)-sn-glycero-3-phosphocholine(in) + H(+)(in). It carries out the reaction a 1-O-(1Z-alkenyl)-sn-glycero-3-phosphoethanolamine(out) + H(+)(out) = a 1-O-(1Z-alkenyl)-sn-glycero-3-phosphoethanolamine(in) + H(+)(in). Its function is as follows. Mediates the rate-limiting, proton-dependent, lysosomal efflux of lysophospholipids. Selective for zwitterionic headgroups such as lysophosphatidylcholine (LPC) and lysophosphatidylethanolamine (LPE). Essential player in lysosomal homeostasis. The chain is Protein spinster homolog 1 (spns1) from Xenopus tropicalis (Western clawed frog).